We begin with the raw amino-acid sequence, 156 residues long: Small ribosomal subunit protein uS7 (156 aa).

This sequence belongs to the universal ribosomal protein uS7 family. Part of the 30S ribosomal subunit. Contacts proteins S9 and S11.

In terms of biological role, one of the primary rRNA binding proteins, it binds directly to 16S rRNA where it nucleates assembly of the head domain of the 30S subunit. Is located at the subunit interface close to the decoding center, probably blocks exit of the E-site tRNA. In Laribacter hongkongensis (strain HLHK9), this protein is Small ribosomal subunit protein uS7.